Reading from the N-terminus, the 348-residue chain is tRNA-specific 2-thiouridylase MnmA (348 aa).

ATP-binding positions include 8-15 (LLSGGVDS) and methionine 34. Cysteine 105 (nucleophile) is an active-site residue. Cysteine 105 and cysteine 197 form a disulfide bridge. Glycine 129 lines the ATP pocket. An interaction with tRNA region spans residues 147–149 (KDQ). The active-site Cysteine persulfide intermediate is cysteine 197.

The protein belongs to the MnmA/TRMU family.

It localises to the cytoplasm. The catalysed reaction is S-sulfanyl-L-cysteinyl-[protein] + uridine(34) in tRNA + AH2 + ATP = 2-thiouridine(34) in tRNA + L-cysteinyl-[protein] + A + AMP + diphosphate + H(+). Its function is as follows. Catalyzes the 2-thiolation of uridine at the wobble position (U34) of tRNA, leading to the formation of s(2)U34. This chain is tRNA-specific 2-thiouridylase MnmA, found in Fervidobacterium nodosum (strain ATCC 35602 / DSM 5306 / Rt17-B1).